The following is a 360-amino-acid chain: MDPEETSVYLDYYYATSPNPDIRETHSHVPYTSVFLPVFYTAVFLTGVLGNLVLMGALHFKPGSRRLIDIFIINLAASDFIFLVTLPLWVDKEASLGLWRTGSFLCKGSSYMISVNMHCSVFLLTCMSVDRYLAIVCPVVSRKFRRTDCAYVVCASIWFISCLLGLPTLLSRELTLIDDKPYCAEKKATPLKLIWSLVALIFTFFVPLLSIVTCYCCIARKLCAHYQQSGKHNKKLKKSIKIIFIVVAAFLVSWLPFNTFKLLAIVSGLQQERYFPSAMLQLGMEVSGPLAFANSCVNPFIYYIFDSYIRRAIVHCLCPCLKNYDFGSSTETSDSHLTKALSTFIHAEDFTRRRKRSVSL.

At 1-33 (MDPEETSVYLDYYYATSPNPDIRETHSHVPYTS) the chain is on the extracellular side. The helical transmembrane segment at 34–54 (VFLPVFYTAVFLTGVLGNLVL) threads the bilayer. Residues 55 to 69 (MGALHFKPGSRRLID) lie on the Cytoplasmic side of the membrane. The chain crosses the membrane as a helical span at residues 70–90 (IFIINLAASDFIFLVTLPLWV). The Extracellular portion of the chain corresponds to 91–120 (DKEASLGLWRTGSFLCKGSSYMISVNMHCS). A helical transmembrane segment spans residues 121 to 141 (VFLLTCMSVDRYLAIVCPVVS). Topologically, residues 142–149 (RKFRRTDC) are cytoplasmic. A helical transmembrane segment spans residues 150 to 170 (AYVVCASIWFISCLLGLPTLL). Residues 171 to 192 (SRELTLIDDKPYCAEKKATPLK) are Extracellular-facing. Residues 193 to 213 (LIWSLVALIFTFFVPLLSIVT) form a helical membrane-spanning segment. Over 214-239 (CYCCIARKLCAHYQQSGKHNKKLKKS) the chain is Cytoplasmic. Residues 240 to 260 (IKIIFIVVAAFLVSWLPFNTF) form a helical membrane-spanning segment. The Extracellular segment spans residues 261–284 (KLLAIVSGLQQERYFPSAMLQLGM). A helical membrane pass occupies residues 285-305 (EVSGPLAFANSCVNPFIYYIF). The Cytoplasmic portion of the chain corresponds to 306-360 (DSYIRRAIVHCLCPCLKNYDFGSSTETSDSHLTKALSTFIHAEDFTRRRKRSVSL). At S359 the chain carries Phosphoserine.

This sequence belongs to the G-protein coupled receptor 1 family. Interacts with adapter YWHAE; this interaction promotes ER-to-Golgi transport of GPR15. Phosphorylation is necessary for YWHAE binding and efficient surface expression. In terms of processing, O-glycosylated. Sialylated O-glycans in the N-terminal tail inhibits binding of GPR15LG. Post-translationally, sulfation is required for efficient binding of GPR15LG.

It is found in the cell membrane. In terms of biological role, g protein-coupled receptor that plays an important role in immune homeostasis. Acts via its natural ligand GPR15LG, a chemokine-like polypeptide strongly expressed in gastrointestinal tissues. GPR15-GPR15LG signaling axis regulates intestinal homeostasis and inflammation through the migration of immune cells. Controls thereby the specific homing of T-cells, particularly FOXP3+ regulatory T-cells (Tregs), to the large intestine lamina propria. Also required for skin localization of thymus-derived dendritic epidermal T-cells. Plays an important role in mediating cytoprotective function as well as angiogenesis of thrombomodulin. Mechanistically, preferentially signals through the Gi/o pathway to inhibit adenylate cyclase activity and activate a phosphatidylinositol-calcium second messenger system that regulates the release of Ca(2+) ions from intracellular stores. The chain is G-protein coupled receptor 15 (GPR15) from Macaca mulatta (Rhesus macaque).